The sequence spans 223 residues: Kynurenine formamidase (223 aa).

A substrate-binding site is contributed by F34. The Zn(2+) site is built by H64, H68, and D70. H74 acts as the Proton donor/acceptor in catalysis. Zn(2+) contacts are provided by H174 and E186.

The protein belongs to the Cyclase 1 superfamily. KynB family. Homodimer. The cofactor is Zn(2+).

It catalyses the reaction N-formyl-L-kynurenine + H2O = L-kynurenine + formate + H(+). It functions in the pathway amino-acid degradation; L-tryptophan degradation via kynurenine pathway; L-kynurenine from L-tryptophan: step 2/2. Catalyzes the hydrolysis of N-formyl-L-kynurenine to L-kynurenine, the second step in the kynurenine pathway of tryptophan degradation. This Polaromonas naphthalenivorans (strain CJ2) protein is Kynurenine formamidase.